The following is an 81-amino-acid chain: Omega-conotoxin-like Vc6.4 (81 aa).

An N-terminal signal peptide occupies residues 1–22 (MKLTCVMIVAVLFLTANTFVTA). A propeptide spanning residues 23–51 (VPHSSNVLENLYLKARHEMENPEASKLNT) is cleaved from the precursor. 3 disulfide bridges follow: C55–C72, C62–C76, and C71–C80.

Belongs to the conotoxin O1 superfamily. In terms of tissue distribution, expressed by the venom duct.

It localises to the secreted. Functionally, omega-conotoxins act at presynaptic membranes, they bind and block voltage-gated calcium channels. Act on high voltage-activated (HVA) calcium currents in molluscan neurons. This Conus victoriae (Queen Victoria cone) protein is Omega-conotoxin-like Vc6.4.